The sequence spans 347 residues: Phenylalanine--tRNA ligase alpha subunit (347 aa).

Glu261 contacts Mg(2+).

It belongs to the class-II aminoacyl-tRNA synthetase family. Phe-tRNA synthetase alpha subunit type 1 subfamily. Tetramer of two alpha and two beta subunits. The cofactor is Mg(2+).

Its subcellular location is the cytoplasm. The catalysed reaction is tRNA(Phe) + L-phenylalanine + ATP = L-phenylalanyl-tRNA(Phe) + AMP + diphosphate + H(+). The sequence is that of Phenylalanine--tRNA ligase alpha subunit from Streptococcus pyogenes serotype M1.